Reading from the N-terminus, the 853-residue chain is Guanine nucleotide exchange protein smcr8a (853 aa).

The uDENN FLCN/SMCR8-type domain occupies 47–219; it reads TSYAKFSKDF…KETELQKMNN (173 aa). 2 disordered regions span residues 272 to 298 and 418 to 454; these read PVMD…SRKS and LKPG…SFSS. Positions 280–298 are enriched in polar residues; that stretch reads DTNPSDSAENTVETESRKS. In terms of domain architecture, cDENN FLCN/SMCR8-type spans 316-753; the sequence is RLKTLEELCD…LISHLADHRT (438 aa). Residues 421 to 432 are compositionally biased toward low complexity; it reads GVESGEGPPESS. Residues 433-454 show a composition bias toward polar residues; that stretch reads TSDITQETSEAADTETKGSFSS. In terms of domain architecture, dDENN FLCN/SMCR8-type spans 762-826; it reads FLHIQGMLTQ…IIQYLSELIK (65 aa).

This sequence belongs to the SMCR8 family. As to quaternary structure, component of the C9orf72-SMCR8 complex. The C9orf72-SMCR8 complex associates with the ATG1/ULK1 kinase complex.

The protein localises to the cytoplasm. It localises to the nucleus. Its function is as follows. Component of the C9orf72-SMCR8 complex, a complex that has guanine nucleotide exchange factor (GEF) activity and regulates autophagy. In the complex, C9orf72 and SMCR8 probably constitute the catalytic subunits that promote the exchange of GDP to GTP, converting inactive GDP-bound RAB8A and RAB39B into their active GTP-bound form, thereby promoting autophagosome maturation. The C9orf72-SMCR8 complex also acts as a negative regulator of autophagy initiation by interacting with the ATG1/ULK1 kinase complex and inhibiting its protein kinase activity. This is Guanine nucleotide exchange protein smcr8a (smcr8a) from Danio rerio (Zebrafish).